A 147-amino-acid polypeptide reads, in one-letter code: UPF0275 protein PM0504 (147 aa).

This sequence belongs to the UPF0275 family.

This is UPF0275 protein PM0504 from Pasteurella multocida (strain Pm70).